We begin with the raw amino-acid sequence, 443 residues long: Histidine--tRNA ligase (443 aa).

Residues 1–20 (MTESEKKQQKPQKAKAEKFK) show a composition bias toward basic and acidic residues. The interval 1–21 (MTESEKKQQKPQKAKAEKFKA) is disordered.

It belongs to the class-II aminoacyl-tRNA synthetase family. Homodimer.

It is found in the cytoplasm. The enzyme catalyses tRNA(His) + L-histidine + ATP = L-histidyl-tRNA(His) + AMP + diphosphate + H(+). This Corynebacterium jeikeium (strain K411) protein is Histidine--tRNA ligase.